Consider the following 180-residue polypeptide: Translation machinery-associated protein 16 homolog (180 aa).

Over residues 1–12 (MTNLRKELEKCK) the composition is skewed to basic and acidic residues. The interval 1–32 (MTNLRKELEKCKHPNSRKTKALGKKARRQNNK) is disordered. Over residues 13-32 (HPNSRKTKALGKKARRQNNK) the composition is skewed to basic residues.

Belongs to the TMA16 family.

This is Translation machinery-associated protein 16 homolog from Drosophila melanogaster (Fruit fly).